We begin with the raw amino-acid sequence, 424 residues long: Vasopressin V1a receptor (424 aa).

Residues 1–40 (MSFPRGSQDRSVGNSSPWWPLTTEGSNGSQEAARLGEGDS) are disordered. The Extracellular segment spans residues 1 to 52 (MSFPRGSQDRSVGNSSPWWPLTTEGSNGSQEAARLGEGDSPLGDVRNEELAK). The span at 9–30 (DRSVGNSSPWWPLTTEGSNGSQ) shows a compositional bias: polar residues. Asn27 is a glycosylation site (N-linked (GlcNAc...) asparagine). A helical transmembrane segment spans residues 53 to 76 (LEIAVLAVIFVVAVLGNSSVLLAL). Residues 77-88 (HRTPRKTSRMHL) are Cytoplasmic-facing. Residues 89–110 (FIRHLSLADLAVAFFQVLPQLC) traverse the membrane as a helical segment. The Extracellular portion of the chain corresponds to 111–125 (WDITYRFRGPDWLCR). The cysteines at positions 124 and 205 are disulfide-linked. The helical transmembrane segment at 126 to 147 (VVKHLQVFAMFASAYMLVVMTA) threads the bilayer. Residues 148 to 168 (DRYIAVCHPLKTLQQPARRSR) lie on the Cytoplasmic side of the membrane. The helical transmembrane segment at 169-190 (LMIATSWVLSFILSTPQYFIFS) threads the bilayer. Residues 191-220 (VIEIEVNNGTKTQDCWATFIQPWGTRAYVT) lie on the Extracellular side of the membrane. The chain crosses the membrane as a helical span at residues 221 to 241 (WMTSGVFVAPVVVLGTCYGFI). Over 242 to 299 (CYHIWRNIRGKTASSRHSKGDKGSGEAVGPFHKGLLVTPCVSSVKSISRAKIRTVKMT) the chain is Cytoplasmic. The chain crosses the membrane as a helical span at residues 300–319 (FVIVSAYILCWAPFFIVQMW). Over 320–337 (SVWDENFIWTDSENPSIT) the chain is Extracellular. The chain crosses the membrane as a helical span at residues 338–357 (ITALLASLNSCCNPWIYMFF). At 358–424 (SGHLLQDCVQ…KSIRFIPVST (67 aa)) the chain is on the cytoplasmic side. Residues Cys371 and Cys372 are each lipidated (S-palmitoyl cysteine). Residues 383 to 416 (DSDSMSRRQTSYSNNRSPTNSTGMWKDSPKSSKS) form a disordered region. Residues 389-405 (RRQTSYSNNRSPTNSTG) show a composition bias toward polar residues. Ser410 bears the Phosphoserine mark.

It belongs to the G-protein coupled receptor 1 family. Vasopressin/oxytocin receptor subfamily. In terms of processing, palmitoylated on three cysteine residues, of which only two are identified. As to expression, localized within gonadotropes of the anterior pituitary of the brain. Broadly distributed throughout the cerebral cortex.

Its subcellular location is the cell membrane. It localises to the cytoplasmic vesicle membrane. Receptor for arginine vasopressin. The activity of this receptor is mediated by G proteins which activate a phosphatidyl-inositol-calcium second messenger system. Involved in social memory formation. The protein is Vasopressin V1a receptor (Avpr1a) of Rattus norvegicus (Rat).